Reading from the N-terminus, the 44-residue chain is MRDFKTYLSVAPVLSTLWFGALAGLLIEINRFFPDALTFPFFSF.

A helical transmembrane segment spans residues 7–27 (YLSVAPVLSTLWFGALAGLLI).

Belongs to the PsaJ family.

The protein localises to the plastid. Its subcellular location is the chloroplast thylakoid membrane. In terms of biological role, may help in the organization of the PsaE and PsaF subunits. The sequence is that of Photosystem I reaction center subunit IX from Coffea arabica (Arabian coffee).